A 168-amino-acid chain; its full sequence is uncharacterized protein (168 aa).

The helical transmembrane segment at 5 to 24 (IAWASACLLLVMLTGFFTIG) threads the bilayer.

The protein resides in the membrane. This is an uncharacterized protein from Bacillus subtilis (strain 168).